The chain runs to 450 residues: Immunoglobulin G-binding protein A (450 aa).

A signal peptide spans 1–36 (MKKKNIYSIRKLGVGIASVTLGTLLISGGVTPAANA). The YSIRK-G/S signaling motif motif lies at 7-18 (YSIRKLGVGIAS). The stretch at 37–92 (AQHDEAQQNAFYQVLNMPNLNADQRNGFIQSLKDDPSQSANVLGEAQKLNDSQAPK) is one Immunoglobulin-binding region E repeat. One copy of the Immunoglobulin-binding region D repeat lies at 93 to 153 (ADAQQNNFNK…KKLNESQAPK (61 aa)). Residues 154–211 (ADNNFNKEQQNAFYEILNMPNLNEEQRNGFIQSLKDDPSQSANLLSEAKKLNESQAPK) form an Immunoglobulin-binding region A repeat. An Immunoglobulin-binding region B/C repeat occupies 212–269 (ADNKFNKEQQNAFYEILHLPNLNEEQRNGFIQSLKDDPSVSKEILAEAKKLNDAQAPK). Over residues 260 to 354 (KKLNDAQAPK…GNKPGKEDGN (95 aa)) the composition is skewed to basic and acidic residues. 2 disordered regions span residues 260-365 (KKLN…GDTV) and 401-421 (KKQP…ETGE). A run of 11 repeats spans residues 268 to 275 (PKEEDNKK), 276 to 283 (PGKEDGNK), 284 to 291 (PGKEDGNK), 292 to 299 (PGKEDNKK), 300 to 307 (PGKEDGNK), 308 to 315 (PGKEDNNK), 316 to 323 (PGKEDGNK), 324 to 331 (PGKEDNNK), 332 to 339 (PGKEDGNK), 340 to 347 (PGKEDGNK), and 348 to 355 (PGKEDGNG). A 12 X 8 AA approximate tandem repeats region spans residues 268–355 (PKEEDNKKPG…NKPGKEDGNG (88 aa)). Residues 355–399 (GVHVVKPGDTVNDIAKANGTTADKIAADNKLADKNMIKPGQELVV) enclose the LysM domain. The LPXTG sorting signal motif lies at 416-420 (LPETG). Threonine 419 carries the pentaglycyl murein peptidoglycan amidated threonine modification. A propeptide spans 420–450 (GEENPFIGTTVFGGLSLALGAALLAGRRREL) (removed by sortase).

This sequence belongs to the immunoglobulin-binding protein SpA family. In terms of assembly, interacts with host TNFRSF1A; this interaction leads to the stimulation of both surface expression and shedding of TNFRSF1A.

The protein localises to the secreted. Its subcellular location is the cell wall. Its function is as follows. Plays a role in the inhibition of the host innate and adaptive immune responses. Possesses five immunoglobulin-binding domains that capture both the fragment crystallizable region (Fc region) and the Fab region (part of Ig that identifies antigen) of immunoglobulins. In turn, Staphylococcus aureus is protected from phagocytic killing via inhibition of Ig Fc region. In addition, the host elicited B-cell response is prevented due to a decrease of antibody-secreting cell proliferation that enter the bone marrow, thereby decreasing long-term antibody production. Inhibits osteogenesis by preventing osteoblast proliferation and expression of alkaline phosphatase, type I collagen, osteopontin and osteocalcin. Acts directly as a pro-inflammatory factor in the lung through its ability to bind and activate tumor necrosis factor alpha receptor 1/TNFRSF1A. The chain is Immunoglobulin G-binding protein A (spa) from Staphylococcus aureus (strain Mu50 / ATCC 700699).